Reading from the N-terminus, the 241-residue chain is Peroxisomal membrane protein 11C (241 aa).

At 1 to 122 (MALLNRLASA…ADAKVLRVDS (122 aa)) the chain is on the cytoplasmic side. The chain crosses the membrane as a helical span at residues 123-149 (AWWWTLNTALWTLSLLLGAVKALWTML). Over 150 to 211 (KLRQKLRSPT…GVLWAGRFPP (62 aa)) the chain is Lumenal. The chain crosses the membrane as a helical span at residues 212-227 (WLVGLMGTISSILSTC). Topologically, residues 228–241 (QAVRAGRQAEADSP) are cytoplasmic.

Belongs to the peroxin-11 family. In terms of assembly, homodimer. Heterodimer with either PEX11A or PEX11B. Interacts with FIS1. Expressed in liver and at much lower levels in heart, kidney and testis.

Its subcellular location is the peroxisome membrane. Functionally, promotes membrane protrusion and elongation on the peroxisomal surface. The polypeptide is Peroxisomal membrane protein 11C (Pex11g) (Mus musculus (Mouse)).